The primary structure comprises 80 residues: Conotoxin Bu3 (80 aa).

The first 22 residues, M1–A22, serve as a signal peptide directing secretion. Positions D23 to R51 are excised as a propeptide. Cystine bridges form between C53–C69, C60–C72, and C68–C79.

This sequence belongs to the conotoxin O1 superfamily. As to expression, expressed by the venom duct.

Its subcellular location is the secreted. The polypeptide is Conotoxin Bu3 (Conus bullatus (Bubble cone)).